We begin with the raw amino-acid sequence, 155 residues long: Protein-export protein SecB (155 aa).

This sequence belongs to the SecB family. As to quaternary structure, homotetramer, a dimer of dimers. One homotetramer interacts with 1 SecA dimer.

It is found in the cytoplasm. One of the proteins required for the normal export of preproteins out of the cell cytoplasm. It is a molecular chaperone that binds to a subset of precursor proteins, maintaining them in a translocation-competent state. It also specifically binds to its receptor SecA. This chain is Protein-export protein SecB, found in Salmonella heidelberg (strain SL476).